The chain runs to 319 residues: Transcriptional regulator LsrR (319 aa).

The H-T-H motif DNA-binding region spans Gln32 to Gln55.

The protein belongs to the SorC transcriptional regulatory family.

The protein localises to the cytoplasm. Its activity is regulated as follows. Inactivated by phosphorylated autoinducer-2 (phospho-AI-2). Phospho-AI-2 acts by binding to LsrR, which is then unable to bind to the promoter regions, allowing the transcription of the target genes. In terms of biological role, transcriptional regulator that represses the expression of the lsr operon (lsrACDBFGE) in the absence of the quorum-sensing signaling molecule autoinducer 2 (AI-2). It also represses the expression of the lsrRK operon. Acts by binding to the intergenic region between the lsr operon and lsrR. In the presence of phosphorylated autoinducer-2 (phospho-AI-2), LsrR is inactivated, leading to the transcription of the genes. The regulatory function of LsrR was thought to be limited to the lsr operon, but it was subsequently shown to be involved, directly or indirectly, in the regulation of SPI-1 and flagella genes. It negatively regulates the expression of those genes, which reduces the ability of Salmonella to invade host cells. This chain is Transcriptional regulator LsrR, found in Salmonella typhimurium (strain LT2 / SGSC1412 / ATCC 700720).